Consider the following 910-residue polypeptide: Leucine--tRNA ligase (910 aa).

Positions Pro50 to His60 match the 'HIGH' region motif. A 'KMSKS' region motif is present at residues Lys611–Ser615. Lys614 is an ATP binding site.

Belongs to the class-I aminoacyl-tRNA synthetase family.

Its subcellular location is the cytoplasm. The enzyme catalyses tRNA(Leu) + L-leucine + ATP = L-leucyl-tRNA(Leu) + AMP + diphosphate. The polypeptide is Leucine--tRNA ligase (Thermoplasma acidophilum (strain ATCC 25905 / DSM 1728 / JCM 9062 / NBRC 15155 / AMRC-C165)).